A 211-amino-acid polypeptide reads, in one-letter code: MANCIVRDWQGKEAGKASLDLKVAKEASALDLMHRAVLRQQAHSRQGTASTLTRSEVRGGGRKPYKQKGTGRARQGSVRTPLRPGGGIIFGPKPRSYNLAMNRKERRSALRTALMARIEDLVVVKDFATTLTTPKTKEIIDALGRLDVSATSKVLIILTNPSEAVRRSIRNLETVKLIAADQLNVFDLLHANKLVVGEDALAKIQEVYGDD.

Residues 40–85 form a disordered region; that stretch reads QQAHSRQGTASTLTRSEVRGGGRKPYKQKGTGRARQGSVRTPLRPG. Over residues 41–54 the composition is skewed to polar residues; sequence QAHSRQGTASTLTR. The span at 60-71 shows a compositional bias: basic residues; the sequence is GGRKPYKQKGTG.

This sequence belongs to the universal ribosomal protein uL4 family. In terms of assembly, part of the 50S ribosomal subunit.

Its function is as follows. One of the primary rRNA binding proteins, this protein initially binds near the 5'-end of the 23S rRNA. It is important during the early stages of 50S assembly. It makes multiple contacts with different domains of the 23S rRNA in the assembled 50S subunit and ribosome. In terms of biological role, forms part of the polypeptide exit tunnel. In Synechococcus sp. (strain CC9311), this protein is Large ribosomal subunit protein uL4.